The sequence spans 203 residues: Orotate phosphoribosyltransferase (203 aa).

5-phospho-alpha-D-ribose 1-diphosphate contacts are provided by residues Arg94, Lys98, His100, and 120–128; that span reads EDLISTGGS. Ser124 is an orotate binding site.

The protein belongs to the purine/pyrimidine phosphoribosyltransferase family. PyrE subfamily. In terms of assembly, homodimer. It depends on Mg(2+) as a cofactor.

It carries out the reaction orotidine 5'-phosphate + diphosphate = orotate + 5-phospho-alpha-D-ribose 1-diphosphate. Its pathway is pyrimidine metabolism; UMP biosynthesis via de novo pathway; UMP from orotate: step 1/2. Its function is as follows. Catalyzes the transfer of a ribosyl phosphate group from 5-phosphoribose 1-diphosphate to orotate, leading to the formation of orotidine monophosphate (OMP). This Staphylococcus aureus (strain COL) protein is Orotate phosphoribosyltransferase.